We begin with the raw amino-acid sequence, 96 residues long: Protein Vpr (96 aa).

The homooligomerization stretch occupies residues 1-42; it reads MEQAPEDQGPQREPYNQWALELLEELKNEAVRHFPRIWLHGL. Phosphoserine; by host is present on residues Ser79, Ser94, and Ser96.

The protein belongs to the HIV-1 VPR protein family. As to quaternary structure, homooligomer, may form homodimer. Interacts with p6-gag region of the Pr55 Gag precursor protein through a (Leu-X-X)4 motif near the C-terminus of the P6gag protein. Interacts with host UNG. May interact with host RAD23A/HHR23A. Interacts with host VPRBP/DCAF1, leading to hijack the CUL4A-RBX1-DDB1-DCAF1/VPRBP complex, mediating ubiquitination of host proteins such as TERT and ZGPAT and arrest of the cell cycle in G2 phase. Post-translationally, phosphorylated on several residues by host. These phosphorylations regulate VPR activity for the nuclear import of the HIV-1 pre-integration complex.

It localises to the virion. Its subcellular location is the host nucleus. The protein localises to the host extracellular space. Its function is as follows. During virus replication, may deplete host UNG protein, and incude G2-M cell cycle arrest. Acts by targeting specific host proteins for degradation by the 26S proteasome, through association with the cellular CUL4A-DDB1 E3 ligase complex by direct interaction with host VPRPB/DCAF-1. Cell cycle arrest reportedly occurs within hours of infection and is not blocked by antiviral agents, suggesting that it is initiated by the VPR carried into the virion. Additionally, VPR induces apoptosis in a cell cycle dependent manner suggesting that these two effects are mechanistically linked. Detected in the serum and cerebrospinal fluid of AIDS patient, VPR may also induce cell death to bystander cells. In terms of biological role, during virus entry, plays a role in the transport of the viral pre-integration (PIC) complex to the host nucleus. This function is crucial for viral infection of non-dividing macrophages. May act directly at the nuclear pore complex, by binding nucleoporins phenylalanine-glycine (FG)-repeat regions. This is Protein Vpr from Human immunodeficiency virus type 1 group M subtype B (isolate MN) (HIV-1).